The chain runs to 651 residues: MNSPTVYPVPSQISAHAHIDEQTYQRMYQASIDNPERFWGEQGKRIDWITPYSQTQVKKTSFDANNLSIQWFADGTLNASSNCLDRHLERNGDKIAILWEGDDAKEQRQLSYRELHTQVCQFANVLKAQGVVKGDIVTLYMPMVPEAAVAMLACARIGAVHSVIFGGFSPDSIASRVIDGKSKVIITADEGIRAGRTIPLKHNVDEALARPSVTCVNNVIVLKRTGANVDWQQGRDLDWDELMAGVSSDCPAEEMNAEDPLFLLYTSGSTGNPKGVLHTTGGYLVYAAMTHEYVFDYKENEVYWCTADVGWITGHSYMVYGPFANGATVLMHEGVPNYPTPARLGEIVDRHKVNILYTAPTLIRALMAEGKEHFNGFSGESLRIMGSVGEPINPEAWRWYHEVIGHEHCPIVDTWWQTETGGILISPLPGAIATKPGSATRPFFGVKPAIVDSTGQILEGAVEGNLVMLDSWPGQMRTVYGDHARFALTYFSTFKGMYFTGDGARRDEDGYYWITGRVDDVINVSGHRLGTAEVESALVAHEQVAEAAVVGYPHDIKGQGIYAYVTLVHDAEPSEALRQELRQWVRKEIGALATPDLIQWATGLPKTRSGKIMRRFLRKIAANEVTNLGDSSTLADPSVIDTLIASRLNQR.

CoA contacts are provided by residues 193–196 (RAGR), T313, and N337. ATP is bound by residues 389–391 (GEP), 413–418 (DTWWQT), D502, and R517. S525 is a CoA binding site. R528 contacts ATP. V539, H541, and V544 together coordinate Mg(2+). R586 contributes to the CoA binding site. K611 is modified (N6-acetyllysine).

It belongs to the ATP-dependent AMP-binding enzyme family. Mg(2+) serves as cofactor. In terms of processing, acetylated. Deacetylation by the SIR2-homolog deacetylase activates the enzyme.

The enzyme catalyses acetate + ATP + CoA = acetyl-CoA + AMP + diphosphate. Functionally, catalyzes the conversion of acetate into acetyl-CoA (AcCoA), an essential intermediate at the junction of anabolic and catabolic pathways. AcsA undergoes a two-step reaction. In the first half reaction, AcsA combines acetate with ATP to form acetyl-adenylate (AcAMP) intermediate. In the second half reaction, it can then transfer the acetyl group from AcAMP to the sulfhydryl group of CoA, forming the product AcCoA. In Shewanella denitrificans (strain OS217 / ATCC BAA-1090 / DSM 15013), this protein is Acetyl-coenzyme A synthetase.